The sequence spans 89 residues: MNTQFFEEYQTQLLDWQKKFFSTWMESLPKGTAEIKLTDTFETSLKLQEEMVKSYLEAQEKSATMMIDAQKQFWDNYFQALRQEPVSAN.

Helix stretches follow at residues 3 to 26 (TQFF…TWME) and 39 to 83 (DTFE…ALRQ).

Homotetramer.

The protein localises to the cellular thylakoid membrane. It is found in the cytoplasm. Its pathway is biopolymer metabolism; poly-(R)-3-hydroxybutanoate biosynthesis. In terms of biological role, a phasin, it attaches to the polyhydroxybutyrate (PHB) granule surface regulating the number and size of PHB granules within a cell. It probably also acts as a regulator affecting the biosynthetic activity of PHB synthase in vivo. This chain is Phasin PhaP, found in Synechocystis sp. (strain ATCC 27184 / PCC 6803 / Kazusa).